The following is a 429-amino-acid chain: Ribosomal RNA small subunit methyltransferase B (429 aa).

Residues 254–260 (CAAPGGK), aspartate 277, aspartate 303, and aspartate 322 each bind S-adenosyl-L-methionine. Cysteine 375 serves as the catalytic Nucleophile.

This sequence belongs to the class I-like SAM-binding methyltransferase superfamily. RsmB/NOP family.

The protein localises to the cytoplasm. The enzyme catalyses cytidine(967) in 16S rRNA + S-adenosyl-L-methionine = 5-methylcytidine(967) in 16S rRNA + S-adenosyl-L-homocysteine + H(+). Functionally, specifically methylates the cytosine at position 967 (m5C967) of 16S rRNA. The sequence is that of Ribosomal RNA small subunit methyltransferase B from Escherichia coli O6:H1 (strain CFT073 / ATCC 700928 / UPEC).